Here is a 100-residue protein sequence, read N- to C-terminus: Protein translation factor SUI1 homolog (100 aa).

This sequence belongs to the SUI1 family.

The chain is Protein translation factor SUI1 homolog from Thermoplasma volcanium (strain ATCC 51530 / DSM 4299 / JCM 9571 / NBRC 15438 / GSS1).